A 115-amino-acid chain; its full sequence is Large ribosomal subunit protein bL20 (115 aa).

The protein belongs to the bacterial ribosomal protein bL20 family.

Binds directly to 23S ribosomal RNA and is necessary for the in vitro assembly process of the 50S ribosomal subunit. It is not involved in the protein synthesizing functions of that subunit. This Microcystis aeruginosa (strain NIES-843 / IAM M-2473) protein is Large ribosomal subunit protein bL20.